We begin with the raw amino-acid sequence, 395 residues long: Phosphoprotein (395 aa).

2 disordered regions span residues V31–L109 and N126–V214. Basic and acidic residues predominate over residues T65–K74. Composition is skewed to polar residues over residues Q75–T98, L146–A168, and S203–A212. The tract at residues D222–G285 is multimerization.

It belongs to the rubulavirus/avulavirus P protein family. Homotetramer. Interacts (via multimerization domain) with polymerase L; this interaction forms the polymerase L-P complex. Interacts (via N-terminus) with N0 (via Ncore); this interaction allows P to chaperon N0 to avoid N polymerization before encapsidation. Interacts (via C-terminus) with N-RNA template; this interaction positions the polymerase on the template for both transcription and replication.

Essential cofactor of the RNA polymerase L that plays a central role in the transcription and replication by forming the polymerase complex with RNA polymerase L and recruiting L to the genomic N-RNA template for RNA synthesis. Also plays a central role in the encapsidation of nascent RNA chains by forming the encapsidation complex with the nucleocapsid protein N (N-P complex). Acts as a chaperone for newly synthesized free N protein, so-called N0, allowing encapsidation of nascent RNA chains during replication. The nucleoprotein protein N prevents excessive phosphorylation of P, which leads to down-regulation of viral transcription/ replication. Participates, together with N, in the formation of viral factories (viroplasms), which are large inclusions in the host cytoplasm where replication takes place. This Gallus gallus (Chicken) protein is Phosphoprotein (P/C).